A 714-amino-acid polypeptide reads, in one-letter code: Probable serine/threonine-protein kinase mkcB (714 aa).

Residues 1–12 (MKSILKKAKHFF) show a composition bias toward basic residues. Disordered stretches follow at residues 1 to 267 (MKSI…SSTS) and 281 to 349 (GSGS…EQKP). The span at 23-35 (GGEKTAKESESQQ) shows a compositional bias: basic and acidic residues. Over residues 62–83 (SQSQPTTSALQTSTSLQPSSSL) the composition is skewed to low complexity. Over residues 84–94 (HQIPQSQSSLE) the composition is skewed to polar residues. Low complexity-rich tracts occupy residues 95–111 (LTTNPTQQLPTTPTKQL) and 120–166 (PHSQ…TLTT). Polar residues predominate over residues 167–177 (PVPSSENLATL). Low complexity-rich tracts occupy residues 178–241 (STST…QEQT) and 254–267 (LSQSTTSSSTSSTS). Polar residues predominate over residues 282–294 (SGSTKNKDSSSAP). Low complexity-rich tracts occupy residues 300 to 314 (NNNNNTVSSSNKNRS) and 324 to 337 (NNNNNNQNNHKNNN). The Protein kinase domain maps to 438–687 (YKDSDQVGKG…AEELLKHPFI (250 aa)). ATP contacts are provided by residues 444 to 452 (VGKGGFGTV) and lysine 467. Aspartate 558 (proton acceptor) is an active-site residue.

Belongs to the protein kinase superfamily. STE Ser/Thr protein kinase family. STE20 subfamily. The cofactor is Mg(2+). As to expression, expressed at equal levels in prestalk and prespore cells.

The enzyme catalyses L-seryl-[protein] + ATP = O-phospho-L-seryl-[protein] + ADP + H(+). The catalysed reaction is L-threonyl-[protein] + ATP = O-phospho-L-threonyl-[protein] + ADP + H(+). The sequence is that of Probable serine/threonine-protein kinase mkcB from Dictyostelium discoideum (Social amoeba).